Here is a 117-residue protein sequence, read N- to C-terminus: Ribonuclease P protein component (117 aa).

The protein belongs to the RnpA family. As to quaternary structure, consists of a catalytic RNA component (M1 or rnpB) and a protein subunit.

It carries out the reaction Endonucleolytic cleavage of RNA, removing 5'-extranucleotides from tRNA precursor.. Functionally, RNaseP catalyzes the removal of the 5'-leader sequence from pre-tRNA to produce the mature 5'-terminus. It can also cleave other RNA substrates such as 4.5S RNA. The protein component plays an auxiliary but essential role in vivo by binding to the 5'-leader sequence and broadening the substrate specificity of the ribozyme. This is Ribonuclease P protein component from Staphylococcus aureus (strain MW2).